The chain runs to 289 residues: 4-diphosphocytidyl-2-C-methyl-D-erythritol kinase (289 aa).

The active site involves Lys10. 94–104 (PVAAGLAGGSS) serves as a coordination point for ATP. Asp136 is a catalytic residue.

Belongs to the GHMP kinase family. IspE subfamily.

It carries out the reaction 4-CDP-2-C-methyl-D-erythritol + ATP = 4-CDP-2-C-methyl-D-erythritol 2-phosphate + ADP + H(+). It functions in the pathway isoprenoid biosynthesis; isopentenyl diphosphate biosynthesis via DXP pathway; isopentenyl diphosphate from 1-deoxy-D-xylulose 5-phosphate: step 3/6. In terms of biological role, catalyzes the phosphorylation of the position 2 hydroxy group of 4-diphosphocytidyl-2C-methyl-D-erythritol. In Bacillus anthracis, this protein is 4-diphosphocytidyl-2-C-methyl-D-erythritol kinase.